A 504-amino-acid polypeptide reads, in one-letter code: Probable ergothioneine transporter EgtUBC (504 aa).

Positions 19-198 constitute an ABC transmembrane type-1 domain; sequence MIEHIQISFI…LLAIIFDLIL (180 aa). 6 helical membrane passes run 25-45, 49-69, 70-90, 145-165, 178-198, and 209-229; these read ISFI…ILLT, TISE…SLAL, LGLM…ALVV, AMVL…GGLG, SLIL…DLIL, and LLMT…IPMF. The segment at 231-504 is ergothioneine binding domain; the sequence is QKGDKITLAG…DYLKAKGLIK (274 aa).

The protein in the N-terminal section; belongs to the binding-protein-dependent transport system permease family. It in the C-terminal section; belongs to the OsmX family. The complex is probably composed of at least an ATP-binding protein (EgtUA) and a transmembrane protein (EgtUBC).

It localises to the membrane. Its function is as follows. Part of an ABC transporter complex EgtU required for the uptake of ergothioneine (EGT), a natural low-molecular weight (LMW) thiol antioxidant. Responsible for the translocation of the substrate across the membrane. Also contains a C-terminal periplasmic solute-binding domain (SBD) which binds to EGT with sub-micromolar affinity. Probably does not bind L-hercynine. The chain is Probable ergothioneine transporter EgtUBC (egtUBC) from Staphylococcus aureus (strain USA300).